The chain runs to 177 residues: 3-hydroxydecanoyl-[acyl-carrier-protein] dehydratase (177 aa).

H76 is a catalytic residue.

This sequence belongs to the thioester dehydratase family. FabA subfamily. Homodimer.

The protein localises to the cytoplasm. It catalyses the reaction a (3R)-hydroxyacyl-[ACP] = a (2E)-enoyl-[ACP] + H2O. The catalysed reaction is (3R)-hydroxydecanoyl-[ACP] = (2E)-decenoyl-[ACP] + H2O. It carries out the reaction (2E)-decenoyl-[ACP] = (3Z)-decenoyl-[ACP]. It functions in the pathway lipid metabolism; fatty acid biosynthesis. In terms of biological role, necessary for the introduction of cis unsaturation into fatty acids. Catalyzes the dehydration of (3R)-3-hydroxydecanoyl-ACP to E-(2)-decenoyl-ACP and then its isomerization to Z-(3)-decenoyl-ACP. Can catalyze the dehydratase reaction for beta-hydroxyacyl-ACPs with saturated chain lengths up to 16:0, being most active on intermediate chain length. This chain is 3-hydroxydecanoyl-[acyl-carrier-protein] dehydratase, found in Mannheimia succiniciproducens (strain KCTC 0769BP / MBEL55E).